The following is a 440-amino-acid chain: Xaa-Pro dipeptidase (440 aa).

Residues aspartate 244, aspartate 255, histidine 335, glutamate 380, and glutamate 419 each contribute to the Mn(2+) site.

This sequence belongs to the peptidase M24B family. Bacterial-type prolidase subfamily. It depends on Mn(2+) as a cofactor.

It carries out the reaction Xaa-L-Pro dipeptide + H2O = an L-alpha-amino acid + L-proline. In terms of biological role, splits dipeptides with a prolyl residue in the C-terminal position. The polypeptide is Xaa-Pro dipeptidase (Shewanella loihica (strain ATCC BAA-1088 / PV-4)).